Here is a 347-residue protein sequence, read N- to C-terminus: Holliday junction branch migration complex subunit RuvB (347 aa).

Residues 1–183 (MTDVPRMVTP…FGIPVRLNFY (183 aa)) form a large ATPase domain (RuvB-L) region. ATP contacts are provided by residues L22, R23, G64, K67, T68, T69, 130-132 (EDF), R173, Y183, and R220. T68 is a binding site for Mg(2+). The small ATPAse domain (RuvB-S) stretch occupies residues 184–254 (TVDELEKIVS…IADHALGALE (71 aa)). Residues 257 to 347 (AAGLDAMDRR…QFGLFGGEDE (91 aa)) are head domain (RuvB-H). R293, R312, and R317 together coordinate DNA.

Belongs to the RuvB family. Homohexamer. Forms an RuvA(8)-RuvB(12)-Holliday junction (HJ) complex. HJ DNA is sandwiched between 2 RuvA tetramers; dsDNA enters through RuvA and exits via RuvB. An RuvB hexamer assembles on each DNA strand where it exits the tetramer. Each RuvB hexamer is contacted by two RuvA subunits (via domain III) on 2 adjacent RuvB subunits; this complex drives branch migration. In the full resolvosome a probable DNA-RuvA(4)-RuvB(12)-RuvC(2) complex forms which resolves the HJ.

It is found in the cytoplasm. It catalyses the reaction ATP + H2O = ADP + phosphate + H(+). The RuvA-RuvB-RuvC complex processes Holliday junction (HJ) DNA during genetic recombination and DNA repair, while the RuvA-RuvB complex plays an important role in the rescue of blocked DNA replication forks via replication fork reversal (RFR). RuvA specifically binds to HJ cruciform DNA, conferring on it an open structure. The RuvB hexamer acts as an ATP-dependent pump, pulling dsDNA into and through the RuvAB complex. RuvB forms 2 homohexamers on either side of HJ DNA bound by 1 or 2 RuvA tetramers; 4 subunits per hexamer contact DNA at a time. Coordinated motions by a converter formed by DNA-disengaged RuvB subunits stimulates ATP hydrolysis and nucleotide exchange. Immobilization of the converter enables RuvB to convert the ATP-contained energy into a lever motion, pulling 2 nucleotides of DNA out of the RuvA tetramer per ATP hydrolyzed, thus driving DNA branch migration. The RuvB motors rotate together with the DNA substrate, which together with the progressing nucleotide cycle form the mechanistic basis for DNA recombination by continuous HJ branch migration. Branch migration allows RuvC to scan DNA until it finds its consensus sequence, where it cleaves and resolves cruciform DNA. The chain is Holliday junction branch migration complex subunit RuvB from Nitrobacter hamburgensis (strain DSM 10229 / NCIMB 13809 / X14).